Reading from the N-terminus, the 405-residue chain is MENIMTLPKIKQVRAWFTGGATAEKGAGGGDYHDQGANHWIDDHIATPMSKYRDYEQSRQSFGINVLGTLIVEVEAENGQTGFAVSTAGEMGCFIVEKHLNRFIEGKCVSDIKLIHDQMLNATLYYSGSGGLVMNTISCVDLALWDLFGKVVGLPVYKLLGGAVRDEIQFYATGARPDLAKEMGFIGGKMPTHWGPHDGDAGIRKDAAMVADMREKCGEDFWLMLDCWMSQDVNYAIKLAHACAPYNLKWIEECLPPQQYEGYRELKHNAPAGMMVTSGEHHGTLQSFRTLSETGIDIMQPDVGWCGGLTTLVEIAAIAKSRGQLVVPHGSSVYSHHAVITFTNTPFSEFLMTSPDCSTMRPQFDPILLNEPVPVNGRIHKSVLDKPGFGVELNRDCNLKRPYSH.

2 residues coordinate substrate: His-33 and Arg-59. Asp-226, Glu-252, and Glu-280 together coordinate Mg(2+). His-329 functions as the Proton acceptor in the catalytic mechanism. Residue Glu-349 participates in substrate binding.

It belongs to the mandelate racemase/muconate lactonizing enzyme family. RhamD subfamily. In terms of assembly, homooctamer; tetramer of dimers. Mg(2+) is required as a cofactor.

The catalysed reaction is L-rhamnonate = 2-dehydro-3-deoxy-L-rhamnonate + H2O. In terms of biological role, catalyzes the dehydration of L-rhamnonate to 2-keto-3-deoxy-L-rhamnonate (KDR). The chain is L-rhamnonate dehydratase from Escherichia coli O6:H1 (strain CFT073 / ATCC 700928 / UPEC).